The sequence spans 122 residues: MGQSVSATRRVSRLRRHARLRKKIAGTPERPRLVVNRSARHIHVQLVNDENGTTVAAASSIEDDVRSLQGDKKARSVRVGQLIAERAKAAGIDSVVFDRGGYTYGGRIAALADAARENGLQF.

The protein belongs to the universal ribosomal protein uL18 family. Part of the 50S ribosomal subunit; part of the 5S rRNA/L5/L18/L25 subcomplex. Contacts the 5S and 23S rRNAs.

This is one of the proteins that bind and probably mediate the attachment of the 5S RNA into the large ribosomal subunit, where it forms part of the central protuberance. This chain is Large ribosomal subunit protein uL18, found in Mycobacterium avium (strain 104).